The primary structure comprises 134 residues: 16 kDa beta-galactoside-binding lectin (134 aa).

N-acetylmethionine is present on Met-1. The region spanning 4 to 134 (GLVVTQLDVQ…DFKVKAIKFS (131 aa)) is the Galectin domain. 69–75 (WGEEDRK) provides a ligand contact to a beta-D-galactoside.

As to quaternary structure, homodimer. Mainly in the liver (adult), mainly in the muscle (embryo).

Functionally, this protein binds beta-galactoside. Its physiological function is not yet known. It may be involved in the regulation of differentiation. The sequence is that of 16 kDa beta-galactoside-binding lectin from Gallus gallus (Chicken).